The primary structure comprises 424 residues: Serine--tRNA ligase (424 aa).

230–232 (TAE) serves as a coordination point for L-serine. 261-263 (RSE) is a binding site for ATP. Glutamate 284 is an L-serine binding site. 348 to 351 (EISS) is a binding site for ATP. Serine 382 contributes to the L-serine binding site.

It belongs to the class-II aminoacyl-tRNA synthetase family. Type-1 seryl-tRNA synthetase subfamily. As to quaternary structure, homodimer. The tRNA molecule binds across the dimer.

The protein localises to the cytoplasm. The catalysed reaction is tRNA(Ser) + L-serine + ATP = L-seryl-tRNA(Ser) + AMP + diphosphate + H(+). It catalyses the reaction tRNA(Sec) + L-serine + ATP = L-seryl-tRNA(Sec) + AMP + diphosphate + H(+). It functions in the pathway aminoacyl-tRNA biosynthesis; selenocysteinyl-tRNA(Sec) biosynthesis; L-seryl-tRNA(Sec) from L-serine and tRNA(Sec): step 1/1. Catalyzes the attachment of serine to tRNA(Ser). Is also able to aminoacylate tRNA(Sec) with serine, to form the misacylated tRNA L-seryl-tRNA(Sec), which will be further converted into selenocysteinyl-tRNA(Sec). In Solibacter usitatus (strain Ellin6076), this protein is Serine--tRNA ligase.